A 114-amino-acid polypeptide reads, in one-letter code: PDZK1-interacting protein 1 (114 aa).

The Extracellular segment spans residues M1–Q28. The helical transmembrane segment at P29–N51 threads the bilayer. Over H52–M114 the chain is Cytoplasmic. S85 carries the post-translational modification Phosphoserine. The interval H95–M114 is disordered. Basic and acidic residues predominate over residues E105–M114.

It belongs to the PDZK1-interacting protein 1/SMIM24 family. In terms of assembly, forms a heterodimer (via N-terminal transmembrane helix) with SLC5A2/SGLT2 (via TM13); this interaction enhances SLC5A2 transporter activity. Interacts with PDZK1.

The protein localises to the apical cell membrane. In terms of biological role, auxiliary protein of electrogenic Na(+)-coupled sugar symporter SLC5A2/SGLT2 and SLC5A1/SGLT1. Essential for the transporter activity of SLC5A2/SGLT2 but not SLC5A1/SGLT1. The chain is PDZK1-interacting protein 1 from Pongo abelii (Sumatran orangutan).